Reading from the N-terminus, the 159-residue chain is SsrA-binding protein (159 aa).

The protein belongs to the SmpB family.

The protein resides in the cytoplasm. Required for rescue of stalled ribosomes mediated by trans-translation. Binds to transfer-messenger RNA (tmRNA), required for stable association of tmRNA with ribosomes. tmRNA and SmpB together mimic tRNA shape, replacing the anticodon stem-loop with SmpB. tmRNA is encoded by the ssrA gene; the 2 termini fold to resemble tRNA(Ala) and it encodes a 'tag peptide', a short internal open reading frame. During trans-translation Ala-aminoacylated tmRNA acts like a tRNA, entering the A-site of stalled ribosomes, displacing the stalled mRNA. The ribosome then switches to translate the ORF on the tmRNA; the nascent peptide is terminated with the 'tag peptide' encoded by the tmRNA and targeted for degradation. The ribosome is freed to recommence translation, which seems to be the essential function of trans-translation. The sequence is that of SsrA-binding protein from Dichelobacter nodosus (strain VCS1703A).